Reading from the N-terminus, the 152-residue chain is D-aminoacyl-tRNA deacylase (152 aa).

A Gly-cisPro motif, important for rejection of L-amino acids motif is present at residues Gly142–Pro143.

The protein belongs to the DTD family. As to quaternary structure, homodimer.

The protein localises to the cytoplasm. The enzyme catalyses glycyl-tRNA(Ala) + H2O = tRNA(Ala) + glycine + H(+). It carries out the reaction a D-aminoacyl-tRNA + H2O = a tRNA + a D-alpha-amino acid + H(+). An aminoacyl-tRNA editing enzyme that deacylates mischarged D-aminoacyl-tRNAs. Also deacylates mischarged glycyl-tRNA(Ala), protecting cells against glycine mischarging by AlaRS. Acts via tRNA-based rather than protein-based catalysis; rejects L-amino acids rather than detecting D-amino acids in the active site. By recycling D-aminoacyl-tRNA to D-amino acids and free tRNA molecules, this enzyme counteracts the toxicity associated with the formation of D-aminoacyl-tRNA entities in vivo and helps enforce protein L-homochirality. This chain is D-aminoacyl-tRNA deacylase, found in Paraburkholderia phytofirmans (strain DSM 17436 / LMG 22146 / PsJN) (Burkholderia phytofirmans).